Consider the following 69-residue polypeptide: Protein translocase subunit SecE (69 aa).

Residues valine 43–threonine 63 traverse the membrane as a helical segment.

This sequence belongs to the SecE/SEC61-gamma family. Component of the Sec protein translocase complex. Heterotrimer consisting of SecY (alpha), SecG (beta) and SecE (gamma) subunits. The heterotrimers can form oligomers, although 1 heterotrimer is thought to be able to translocate proteins. Interacts with the ribosome. May interact with SecDF, and other proteins may be involved.

It is found in the cell membrane. Functionally, essential subunit of the Sec protein translocation channel SecYEG. Clamps together the 2 halves of SecY. May contact the channel plug during translocation. The polypeptide is Protein translocase subunit SecE (Methanococcoides burtonii (strain DSM 6242 / NBRC 107633 / OCM 468 / ACE-M)).